We begin with the raw amino-acid sequence, 196 residues long: Small ribosomal subunit protein uS4c (196 aa).

The disordered stretch occupies residues 17 to 36; the sequence is ALPGLTRKTPKSGSNLKKKF. Positions 89–150 constitute an S4 RNA-binding domain; that stretch reads MRLDNIVFRL…NQRSKRLVQN (62 aa).

The protein belongs to the universal ribosomal protein uS4 family. As to quaternary structure, part of the 30S ribosomal subunit. Contacts protein S5. The interaction surface between S4 and S5 is involved in control of translational fidelity.

The protein resides in the plastid. It is found in the chloroplast. Functionally, one of the primary rRNA binding proteins, it binds directly to 16S rRNA where it nucleates assembly of the body of the 30S subunit. With S5 and S12 plays an important role in translational accuracy. The protein is Small ribosomal subunit protein uS4c (rps4) of Tragus racemosus (Carrot grass).